A 247-amino-acid polypeptide reads, in one-letter code: Phosphoribosylaminoimidazole-succinocarboxamide synthase (247 aa).

It belongs to the SAICAR synthetase family.

The catalysed reaction is 5-amino-1-(5-phospho-D-ribosyl)imidazole-4-carboxylate + L-aspartate + ATP = (2S)-2-[5-amino-1-(5-phospho-beta-D-ribosyl)imidazole-4-carboxamido]succinate + ADP + phosphate + 2 H(+). The protein operates within purine metabolism; IMP biosynthesis via de novo pathway; 5-amino-1-(5-phospho-D-ribosyl)imidazole-4-carboxamide from 5-amino-1-(5-phospho-D-ribosyl)imidazole-4-carboxylate: step 1/2. The protein is Phosphoribosylaminoimidazole-succinocarboxamide synthase of Gloeobacter violaceus (strain ATCC 29082 / PCC 7421).